We begin with the raw amino-acid sequence, 285 residues long: Shikimate dehydrogenase (NADP(+)) (285 aa).

Residues 20–22 and Thr-67 each bind shikimate; that span reads SRS. Lys-71 serves as the catalytic Proton acceptor. Positions 93 and 108 each coordinate shikimate. NADP(+)-binding positions include 132–136 and Met-224; that span reads GAGGA. Tyr-226 lines the shikimate pocket. Position 248 (Gly-248) interacts with NADP(+).

It belongs to the shikimate dehydrogenase family. In terms of assembly, homodimer.

The catalysed reaction is shikimate + NADP(+) = 3-dehydroshikimate + NADPH + H(+). The protein operates within metabolic intermediate biosynthesis; chorismate biosynthesis; chorismate from D-erythrose 4-phosphate and phosphoenolpyruvate: step 4/7. Involved in the biosynthesis of the chorismate, which leads to the biosynthesis of aromatic amino acids. Catalyzes the reversible NADPH linked reduction of 3-dehydroshikimate (DHSA) to yield shikimate (SA). This Bordetella avium (strain 197N) protein is Shikimate dehydrogenase (NADP(+)).